The following is a 300-amino-acid chain: Probable ABC transporter permease protein YurM (300 aa).

The next 6 membrane-spanning stretches (helical) occupy residues 37-57, 98-118, 129-149, 161-181, 204-224, and 264-284; these read VWVF…WMVM, VIVT…AAYG, FFLV…LVPL, TYWA…IILI, FGVF…TSGI, and WGVL…LFLL. The 192-residue stretch at 94-285 folds into the ABC transmembrane type-1 domain; sequence FMNSVIVTAL…APIIILFLLM (192 aa).

It belongs to the binding-protein-dependent transport system permease family. MalFG subfamily.

Its subcellular location is the cell membrane. Its function is as follows. Probably part of the binding-protein-dependent transport system YurMNO. Probably responsible for the translocation of the substrate across the membrane. The protein is Probable ABC transporter permease protein YurM (yurM) of Bacillus subtilis (strain 168).